The primary structure comprises 57 residues: Small ribosomal subunit protein bS21 (57 aa).

The disordered stretch occupies residues 32–57; it reads VRKRKHFEKPSVKRKKKSEAARKRKF. The segment covering 33–57 has biased composition (basic residues); it reads RKRKHFEKPSVKRKKKSEAARKRKF.

The protein belongs to the bacterial ribosomal protein bS21 family.

The chain is Small ribosomal subunit protein bS21 from Shouchella clausii (strain KSM-K16) (Alkalihalobacillus clausii).